A 197-amino-acid chain; its full sequence is Xanthine phosphoribosyltransferase (197 aa).

Residues Leu20 and Thr27 each coordinate xanthine. 128 to 132 is a binding site for 5-phospho-alpha-D-ribose 1-diphosphate; sequence ANGQA. A xanthine-binding site is contributed by Lys156.

This sequence belongs to the purine/pyrimidine phosphoribosyltransferase family. Xpt subfamily. Homodimer.

The protein resides in the cytoplasm. It catalyses the reaction XMP + diphosphate = xanthine + 5-phospho-alpha-D-ribose 1-diphosphate. The protein operates within purine metabolism; XMP biosynthesis via salvage pathway; XMP from xanthine: step 1/1. Converts the preformed base xanthine, a product of nucleic acid breakdown, to xanthosine 5'-monophosphate (XMP), so it can be reused for RNA or DNA synthesis. The sequence is that of Xanthine phosphoribosyltransferase from Lactococcus lactis subsp. cremoris (strain MG1363).